Consider the following 445-residue polypeptide: Phosphoglucosamine mutase 1 (445 aa).

S102 functions as the Phosphoserine intermediate in the catalytic mechanism. Positions 102, 241, 243, and 245 each coordinate Mg(2+). S102 is modified (phosphoserine).

The protein belongs to the phosphohexose mutase family. Requires Mg(2+) as cofactor. Post-translationally, activated by phosphorylation.

It catalyses the reaction alpha-D-glucosamine 1-phosphate = D-glucosamine 6-phosphate. In terms of biological role, catalyzes the conversion of glucosamine-6-phosphate to glucosamine-1-phosphate. The protein is Phosphoglucosamine mutase 1 of Shewanella frigidimarina (strain NCIMB 400).